The following is a 262-amino-acid chain: Nodulation protein J (262 aa).

The ABC transmembrane type-2 domain occupies 33–259; sequence ASLLGNLADP…FASIALFRRR (227 aa). 7 consecutive transmembrane segments (helical) span residues 37-57, 64-84, 102-122, 125-145, 149-169, 177-197, and 236-256; these read GNLA…GLIV, SYIA…SATF, GILF…VWAA, SVLA…ASWT, CAIP…MVVI, YFVF…GAVF, and LHVG…IALF.

The protein belongs to the ABC-2 integral membrane protein family. Lipooligosaccharide exporter (TC 3.A.1.102) subfamily. The complex is composed of two ATP-binding proteins (NodI) and two transmembrane proteins (NodJ).

The protein resides in the cell inner membrane. In terms of biological role, part of the ABC transporter complex NodIJ involved in the export of the nodulation factors (Nod factors), the bacterial signal molecules that induce symbiosis and subsequent nodulation induction. Nod factors are LCO (lipo-chitin oligosaccharide), a modified beta-1,4-linked N-acetylglucosamine oligosaccharide. This subunit encodes the transporter. The sequence is that of Nodulation protein J (nodJ) from Bradyrhizobium diazoefficiens (strain JCM 10833 / BCRC 13528 / IAM 13628 / NBRC 14792 / USDA 110).